A 157-amino-acid polypeptide reads, in one-letter code: Ubiquitin-like protein 4A (157 aa).

Residues 1 to 76 form the Ubiquitin-like domain; that stretch reads MQLTVKALQG…LNLVVKPLEK (76 aa). K48 is covalently cross-linked (Glycyl lysine isopeptide (Lys-Gly) (interchain with G-Cter in ubiquitin)). S90 is modified (phosphoserine). The required and sufficient for interaction with BAG6 stretch occupies residues 96–138; sequence WQLISKVLARHFSVADASRVLEQLQRDYDRSLSRLTLDDIERL.

In terms of assembly, component of the BAG6/BAT3 complex, at least composed of BAG6, UBL4A and GET4/TRC35. Interacts with BAG6; the interaction is direct and required for UBL4A protein stability. Interacts with USP13; may be indirect via BAG6. In terms of processing, polyubiquitinated. Ubiquitination by AMFR and deubiquitination by USP13 may regulate the interaction between the BAG6/BAT3 complex and SGTA and therefore may regulate client proteins fate.

Its subcellular location is the cytoplasm. The protein resides in the cytosol. The protein localises to the nucleus. Its function is as follows. As part of a cytosolic protein quality control complex, the BAG6/BAT3 complex, maintains misfolded and hydrophobic patches-containing proteins in a soluble state and participates in their proper delivery to the endoplasmic reticulum or alternatively can promote their sorting to the proteasome where they undergo degradation. The BAG6/BAT3 complex is involved in the post-translational delivery of tail-anchored/type II transmembrane proteins to the endoplasmic reticulum membrane. Recruited to ribosomes, it interacts with the transmembrane region of newly synthesized tail-anchored proteins and together with SGTA and ASNA1 mediates their delivery to the endoplasmic reticulum. Client proteins that cannot be properly delivered to the endoplasmic reticulum are ubiquitinated and sorted to the proteasome. Similarly, the BAG6/BAT3 complex also functions as a sorting platform for proteins of the secretory pathway that are mislocalized to the cytosol either delivering them to the proteasome for degradation or to the endoplasmic reticulum. The BAG6/BAT3 complex also plays a role in the endoplasmic reticulum-associated degradation (ERAD), a quality control mechanism that eliminates unwanted proteins of the endoplasmic reticulum through their retrotranslocation to the cytosol and their targeting to the proteasome. It maintains these retrotranslocated proteins in an unfolded yet soluble state condition in the cytosol to ensure their proper delivery to the proteasome. This chain is Ubiquitin-like protein 4A, found in Mus musculus (Mouse).